The following is a 252-amino-acid chain: tRNA (guanine-N(1)-)-methyltransferase (252 aa).

S-adenosyl-L-methionine is bound by residues Gly-113 and 133–138; that span reads LGDYVL.

It belongs to the RNA methyltransferase TrmD family. Homodimer.

It is found in the cytoplasm. The catalysed reaction is guanosine(37) in tRNA + S-adenosyl-L-methionine = N(1)-methylguanosine(37) in tRNA + S-adenosyl-L-homocysteine + H(+). Specifically methylates guanosine-37 in various tRNAs. In Stenotrophomonas maltophilia (strain R551-3), this protein is tRNA (guanine-N(1)-)-methyltransferase.